Consider the following 210-residue polypeptide: Mitochondrial import receptor subunit TOM20-2 (210 aa).

At Met1 the chain carries N-acetylmethionine. Topologically, residues 1–178 (MEFSTADFER…SSKKKKRNTE (178 aa)) are cytoplasmic. TPR repeat units lie at residues 42 to 75 (LLELSQFQPIPEAKLMLNDAISKLEEALTINPGK) and 83 to 120 (ANAYTAHAFYVHDPEEAKEHFDKATEYFQRAENEDPGN). Residues 151–161 (GGGGGGGGGGM) show a composition bias toward gly residues. The segment at 151-172 (GGGGGGGGGGMASSNVSQSSKK) is disordered. The chain crosses the membrane as a helical span at residues 179-199 (FTYDVCGWIILACGIVAWVGM). Residues 200-210 (AKSLGPPPPAR) lie on the Mitochondrial intermembrane side of the membrane.

The protein belongs to the Tom20 family. In terms of assembly, forms part of the preprotein translocase complex of the outer mitochondrial membrane (TOM complex) which consists of at least 6 different proteins (TOM5, TOM6, TOM7, TOM20, TOM22/TOM9 and TOM40). Component of a mitochondrial large protein complex that contains, at least, MIC60, DGS1, TOM40, TOM20 proteins, and petC/RISP. The N-terminus is blocked. As to expression, expressed in roots, flowers, young cotyledons and leaves.

The protein resides in the mitochondrion outer membrane. Central component of the receptor complex responsible for the recognition and translocation of cytosolically synthesized mitochondrial preproteins. Together with TOM22 functions as the transit peptide receptor at the surface of the mitochondrion outer membrane and facilitates the movement of preproteins into the translocation pore. The sequence is that of Mitochondrial import receptor subunit TOM20-2 from Arabidopsis thaliana (Mouse-ear cress).